Here is a 226-residue protein sequence, read N- to C-terminus: Ribonuclease 3 (226 aa).

The 123-residue stretch at 6–128 (INRLQRKLGY…LIGGIFLDSD (123 aa)) folds into the RNase III domain. Glu41 provides a ligand contact to Mg(2+). Residue Asp45 is part of the active site. Mg(2+)-binding residues include Asp114 and Glu117. The active site involves Glu117. The DRBM domain occupies 155 to 225 (DPKTRLQEFL…AEQALKQLEL (71 aa)).

This sequence belongs to the ribonuclease III family. In terms of assembly, homodimer. Mg(2+) is required as a cofactor.

The protein resides in the cytoplasm. It catalyses the reaction Endonucleolytic cleavage to 5'-phosphomonoester.. Digests double-stranded RNA. Involved in the processing of primary rRNA transcript to yield the immediate precursors to the large and small rRNAs (23S and 16S). Processes some mRNAs, and tRNAs when they are encoded in the rRNA operon. Processes pre-crRNA and tracrRNA of type II CRISPR loci if present in the organism. This is Ribonuclease 3 from Edwardsiella ictaluri (strain 93-146).